Consider the following 123-residue polypeptide: uncharacterized protein (123 aa).

The protein to insertion element IS1016 transposase.

This is an uncharacterized protein from Haemophilus influenzae (strain ATCC 51907 / DSM 11121 / KW20 / Rd).